The primary structure comprises 251 residues: 1-(5-phosphoribosyl)-5-[(5-phosphoribosylamino)methylideneamino] imidazole-4-carboxamide isomerase (251 aa).

Aspartate 8 (proton acceptor) is an active-site residue. Aspartate 131 (proton donor) is an active-site residue.

It belongs to the HisA/HisF family.

It is found in the cytoplasm. The enzyme catalyses 1-(5-phospho-beta-D-ribosyl)-5-[(5-phospho-beta-D-ribosylamino)methylideneamino]imidazole-4-carboxamide = 5-[(5-phospho-1-deoxy-D-ribulos-1-ylimino)methylamino]-1-(5-phospho-beta-D-ribosyl)imidazole-4-carboxamide. It participates in amino-acid biosynthesis; L-histidine biosynthesis; L-histidine from 5-phospho-alpha-D-ribose 1-diphosphate: step 4/9. This chain is 1-(5-phosphoribosyl)-5-[(5-phosphoribosylamino)methylideneamino] imidazole-4-carboxamide isomerase, found in Burkholderia thailandensis (strain ATCC 700388 / DSM 13276 / CCUG 48851 / CIP 106301 / E264).